The sequence spans 425 residues: Podosporapepsin (425 aa).

A signal peptide spans 1–28 (MVSLTDLFLASLLVPTSPWLCLPPRIDT). A propeptide spans 29-91 (IDQRGGRVTL…QEEAFARIKR (63 aa)) (activation peptide). A Peptidase A1 domain is found at 108-419 (YVTPVTIGTP…GTNPPRIGFA (312 aa)). Residue Asp126 is part of the active site. Residues Asn184 and Asn273 are each glycosylated (N-linked (GlcNAc...) asparagine). Asp310 is a catalytic residue. Cysteines 346 and 381 form a disulfide. An N-linked (GlcNAc...) asparagine glycan is attached at Asn370.

Belongs to the peptidase A1 family.

This chain is Podosporapepsin (PAPA), found in Podospora anserina (Pleurage anserina).